We begin with the raw amino-acid sequence, 161 residues long: Phosphopantetheine adenylyltransferase (161 aa).

Serine 9 is a binding site for substrate. Residues 9–10 and histidine 17 each bind ATP; that span reads SF. Lysine 41, threonine 73, and arginine 87 together coordinate substrate. Residues 88 to 90, glutamate 98, and 123 to 129 contribute to the ATP site; these read GLR and FAHISST.

Belongs to the bacterial CoaD family. Homohexamer. Mg(2+) serves as cofactor.

The protein resides in the cytoplasm. The enzyme catalyses (R)-4'-phosphopantetheine + ATP + H(+) = 3'-dephospho-CoA + diphosphate. The protein operates within cofactor biosynthesis; coenzyme A biosynthesis; CoA from (R)-pantothenate: step 4/5. Its function is as follows. Reversibly transfers an adenylyl group from ATP to 4'-phosphopantetheine, yielding dephospho-CoA (dPCoA) and pyrophosphate. In Chloroflexus aggregans (strain MD-66 / DSM 9485), this protein is Phosphopantetheine adenylyltransferase.